Consider the following 109-residue polypeptide: uncharacterized protein (109 aa).

3 helical membrane-spanning segments follow: residues 16 to 36, 54 to 74, and 80 to 100; these read YIPL…YYGL, TVYF…LLCL, and FCSS…TLAM.

The protein resides in the membrane. This is an uncharacterized protein from Schizosaccharomyces pombe (strain 972 / ATCC 24843) (Fission yeast).